The chain runs to 134 residues: MSSDRKVLSFEEVSKHNKTKDCWLIISGKVYDVTPFMDDHPGGDEVLLSSTGKDATNDFEDVGHSDTARDMMDKYFIGEIDSSSVPATRTYVAPQQPAYNQDKTPEFIIKILQFLVPILILGLALVVRHYTKKD.

The region spanning 5 to 81 (RKVLSFEEVS…MDKYFIGEID (77 aa)) is the Cytochrome b5 heme-binding domain. Heme contacts are provided by His40 and His64. Residues 107-127 (FIIKILQFLVPILILGLALVV) traverse the membrane as a helical segment. The AKR2A-binding sequence (ABS) required for endoplasmic reticulum membrane targeting motif lies at 128-134 (RHYTKKD).

It belongs to the cytochrome b5 family. In terms of assembly, interacts with CER1, BI-1, FAH1 and FAH2. Interacts with AKR2A. As to expression, expressed in roots, stems, leaves, flowers and siliques.

Its subcellular location is the cell membrane. It localises to the endoplasmic reticulum membrane. Its function is as follows. Membrane bound hemoprotein which function as an electron carrier for several membrane bound oxygenases, including fatty acid desaturases. The polypeptide is Cytochrome b5 isoform E (CYTB5-E) (Arabidopsis thaliana (Mouse-ear cress)).